The primary structure comprises 360 residues: Glutamate 5-kinase (360 aa).

An ATP-binding site is contributed by Lys-7. Substrate-binding residues include Ser-47, Asp-134, and Asn-146. Residues 166–167 (TD) and 210–216 (TGGITTK) each bind ATP. In terms of domain architecture, PUA spans 275–348 (VGQITLDEGA…LNKKENINSS (74 aa)).

The protein belongs to the glutamate 5-kinase family.

The protein resides in the cytoplasm. It carries out the reaction L-glutamate + ATP = L-glutamyl 5-phosphate + ADP. It participates in amino-acid biosynthesis; L-proline biosynthesis; L-glutamate 5-semialdehyde from L-glutamate: step 1/2. Its function is as follows. Catalyzes the transfer of a phosphate group to glutamate to form L-glutamate 5-phosphate. In Prochlorococcus marinus subsp. pastoris (strain CCMP1986 / NIES-2087 / MED4), this protein is Glutamate 5-kinase.